Here is a 474-residue protein sequence, read N- to C-terminus: Bifunctional protein HldE (474 aa).

The ribokinase stretch occupies residues 1–321 (MILSSSLRPT…EYLHSSHQGE (321 aa)). 198 to 201 (NKKE) lines the ATP pocket. Aspartate 266 is a catalytic residue. The interval 348–474 (FTNGCFDILH…SAVVKKIQGS (127 aa)) is cytidylyltransferase.

In the N-terminal section; belongs to the carbohydrate kinase PfkB family. The protein in the C-terminal section; belongs to the cytidylyltransferase family. Homodimer.

It carries out the reaction D-glycero-beta-D-manno-heptose 7-phosphate + ATP = D-glycero-beta-D-manno-heptose 1,7-bisphosphate + ADP + H(+). The enzyme catalyses D-glycero-beta-D-manno-heptose 1-phosphate + ATP + H(+) = ADP-D-glycero-beta-D-manno-heptose + diphosphate. It functions in the pathway nucleotide-sugar biosynthesis; ADP-L-glycero-beta-D-manno-heptose biosynthesis; ADP-L-glycero-beta-D-manno-heptose from D-glycero-beta-D-manno-heptose 7-phosphate: step 1/4. Its pathway is nucleotide-sugar biosynthesis; ADP-L-glycero-beta-D-manno-heptose biosynthesis; ADP-L-glycero-beta-D-manno-heptose from D-glycero-beta-D-manno-heptose 7-phosphate: step 3/4. Its function is as follows. Catalyzes the phosphorylation of D-glycero-D-manno-heptose 7-phosphate at the C-1 position to selectively form D-glycero-beta-D-manno-heptose-1,7-bisphosphate. In terms of biological role, catalyzes the ADP transfer from ATP to D-glycero-beta-D-manno-heptose 1-phosphate, yielding ADP-D-glycero-beta-D-manno-heptose. The protein is Bifunctional protein HldE of Wolinella succinogenes (strain ATCC 29543 / DSM 1740 / CCUG 13145 / JCM 31913 / LMG 7466 / NCTC 11488 / FDC 602W) (Vibrio succinogenes).